Consider the following 311-residue polypeptide: tRNA dimethylallyltransferase (311 aa).

ATP is bound at residue 12-19 (GPTASGKT). 14–19 (TASGKT) contacts substrate. 3 interaction with substrate tRNA regions span residues 37–40 (DSAL), 161–165 (QRINR), and 241–246 (RCVGYR).

This sequence belongs to the IPP transferase family. In terms of assembly, monomer. Requires Mg(2+) as cofactor.

It carries out the reaction adenosine(37) in tRNA + dimethylallyl diphosphate = N(6)-dimethylallyladenosine(37) in tRNA + diphosphate. Functionally, catalyzes the transfer of a dimethylallyl group onto the adenine at position 37 in tRNAs that read codons beginning with uridine, leading to the formation of N6-(dimethylallyl)adenosine (i(6)A). The sequence is that of tRNA dimethylallyltransferase from Histophilus somni (strain 2336) (Haemophilus somnus).